The primary structure comprises 209 residues: MANVHVINHPLVQHKLTIIRDKNTGTKAFRELVDEVATLMAYEITRDMELEDIQVETPLQTTTAKTLTGKKLGVVPILRAGLGMQDGILKLIPAAKVGHVGLYRDHDTLEPVEYFVKLPSDVEERLFIVVDPMLATGGSAIMAIDCLKKRGARNMKFMCLVAAPEGVKALQEAHPDVEIYVAGLDEKLDENGYIRPGLGDAGDRLFGTK.

5-phospho-alpha-D-ribose 1-diphosphate-binding positions include Arg79, Arg104, and 131-139 (DPMLATGGS). Residues Ile194 and 199–201 (GDA) contribute to the uracil site. Asp200 serves as a coordination point for 5-phospho-alpha-D-ribose 1-diphosphate.

Belongs to the UPRTase family. Requires Mg(2+) as cofactor.

The catalysed reaction is UMP + diphosphate = 5-phospho-alpha-D-ribose 1-diphosphate + uracil. It participates in pyrimidine metabolism; UMP biosynthesis via salvage pathway; UMP from uracil: step 1/1. Its activity is regulated as follows. Allosterically activated by GTP. Functionally, catalyzes the conversion of uracil and 5-phospho-alpha-D-ribose 1-diphosphate (PRPP) to UMP and diphosphate. This Listeria innocua serovar 6a (strain ATCC BAA-680 / CLIP 11262) protein is Uracil phosphoribosyltransferase.